The sequence spans 56 residues: Large ribosomal subunit protein bL32c (56 aa).

Belongs to the bacterial ribosomal protein bL32 family.

Its subcellular location is the plastid. It localises to the chloroplast. This Tupiella akineta (Green alga) protein is Large ribosomal subunit protein bL32c.